Reading from the N-terminus, the 244-residue chain is Triosephosphate isomerase (244 aa).

9-11 (NWK) lines the substrate pocket. The active-site Electrophile is the H93. Catalysis depends on E160, which acts as the Proton acceptor. Residues G166 and S206 each contribute to the substrate site.

This sequence belongs to the triosephosphate isomerase family. As to quaternary structure, homodimer.

It localises to the cytoplasm. The enzyme catalyses D-glyceraldehyde 3-phosphate = dihydroxyacetone phosphate. It participates in carbohydrate biosynthesis; gluconeogenesis. It functions in the pathway carbohydrate degradation; glycolysis; D-glyceraldehyde 3-phosphate from glycerone phosphate: step 1/1. In terms of biological role, involved in the gluconeogenesis. Catalyzes stereospecifically the conversion of dihydroxyacetone phosphate (DHAP) to D-glyceraldehyde-3-phosphate (G3P). This Mycoplasma genitalium (strain ATCC 33530 / DSM 19775 / NCTC 10195 / G37) (Mycoplasmoides genitalium) protein is Triosephosphate isomerase.